A 562-amino-acid polypeptide reads, in one-letter code: NAD-dependent malic enzyme (562 aa).

Tyr101 functions as the Proton donor in the catalytic mechanism. An NAD(+)-binding site is contributed by Arg154. Catalysis depends on Lys172, which acts as the Proton acceptor. Glu243, Asp244, and Asp267 together coordinate a divalent metal cation. NAD(+) contacts are provided by Asp267 and Asn415.

The protein belongs to the malic enzymes family. Homotetramer. Requires Mg(2+) as cofactor. Mn(2+) serves as cofactor.

It carries out the reaction (S)-malate + NAD(+) = pyruvate + CO2 + NADH. It catalyses the reaction oxaloacetate + H(+) = pyruvate + CO2. This chain is NAD-dependent malic enzyme, found in Shewanella baltica (strain OS155 / ATCC BAA-1091).